Here is a 388-residue protein sequence, read N- to C-terminus: Cell adhesion molecule 4 (388 aa).

An N-terminal signal peptide occupies residues 1–20; it reads MGRARRFQWPLLLLWAAAAG. The Ig-like V-type domain occupies 21-119; it reads PGTGQEVQTE…DTHHQIATLT (99 aa). Residues 25–324 lie on the Extracellular side of the membrane; that stretch reads QEVQTENVTV…VEAQTSVPYA (300 aa). N-linked (GlcNAc...) asparagine glycans are attached at residues Asn31 and Asn67. Disulfide bonds link Cys44–Cys104, Cys145–Cys199, and Cys245–Cys291. Ig-like C2-type domains are found at residues 124–219 and 224–307; these read PENP…YVLD and PTAR…YVLV. Residue Asn286 is glycosylated (N-linked (GlcNAc...) asparagine). The chain crosses the membrane as a helical span at residues 325-345; that stretch reads IVGGILALLVFLIICVLVGMV. Residues 346–388 are Cytoplasmic-facing; the sequence is WCSVRQKGSYLTHEASGLDEQGEAREAFLNGGDGHKRKEEFFI. Ser361 is modified (phosphoserine).

This sequence belongs to the nectin family. In terms of assembly, monomer and homodimer. In terms of processing, N-glycosylated. Expressed in the brain and several organs including the kidney and liver.

It is found in the membrane. In terms of biological role, involved in the cell-cell adhesion. Has calcium- and magnesium-independent cell-cell adhesion activity. May have tumor-suppressor activity. This chain is Cell adhesion molecule 4 (Cadm4), found in Mus musculus (Mouse).